The primary structure comprises 153 residues: Protein Smg homolog (153 aa).

The protein belongs to the Smg family.

This Neisseria gonorrhoeae (strain ATCC 700825 / FA 1090) protein is Protein Smg homolog.